Consider the following 222-residue polypeptide: Pyridoxine/pyridoxamine 5'-phosphate oxidase (222 aa).

FMN is bound by residues 69–74 (RMVLLK), 84–85 (YT), Lys-91, and Gln-113. Lys-74 is a binding site for substrate. Positions 131, 135, and 139 each coordinate substrate. Residues 148–149 (QS) and Trp-193 each bind FMN. Residue 199-201 (RLH) coordinates substrate. An FMN-binding site is contributed by Arg-203.

The protein belongs to the pyridoxamine 5'-phosphate oxidase family. In terms of assembly, homodimer. FMN serves as cofactor.

The catalysed reaction is pyridoxamine 5'-phosphate + O2 + H2O = pyridoxal 5'-phosphate + H2O2 + NH4(+). It carries out the reaction pyridoxine 5'-phosphate + O2 = pyridoxal 5'-phosphate + H2O2. It functions in the pathway cofactor metabolism; pyridoxal 5'-phosphate salvage; pyridoxal 5'-phosphate from pyridoxamine 5'-phosphate: step 1/1. The protein operates within cofactor metabolism; pyridoxal 5'-phosphate salvage; pyridoxal 5'-phosphate from pyridoxine 5'-phosphate: step 1/1. In terms of biological role, catalyzes the oxidation of either pyridoxine 5'-phosphate (PNP) or pyridoxamine 5'-phosphate (PMP) into pyridoxal 5'-phosphate (PLP). The protein is Pyridoxine/pyridoxamine 5'-phosphate oxidase of Maricaulis maris (strain MCS10) (Caulobacter maris).